The following is a 629-amino-acid chain: MHFHERFDVIVVGGGHAGTEAALAAARMGSKTLLLTHNIDTLGQMSCNPAIGGIGKGHLVKEIDALGGAMAIATDYAGIQFRTLNSSKGPAVRATRAQADRALYRQKIQNILQNQPNLRIFQQAVDDLIVENHQVVGVVTQMGLAFESPAVVLTTGTFLSGKIHIGLENYSGGRAGDPPAIALANRLRELPIRVGRLKTGTPPRIDANTIDFSQMTEQKGDSPLPVMSFMGDVSHHPKQISCWITHTNEKTHEIIRGGLDRSPMYSGVIEGIGPRYCPSIEDKIHRFADKSSHQIFIEPEGLNTNEIYPNGISTSLPFDVQLNLVRSIKGMENAEIMRPGYAIEYDYFDPRDLKNSLETKAINGLFFAGQINGTTGYEEAGAQGLLAGMNASLQVQGKEAWCPRRDEAYLGVLVDDLSTLGTKEPYRMFTSRAEYRLLLREDNADIRLTAKGRELGLVDDARWAEFSEKLESIELELQRLRGQWVHPNSPLIHALNPHLNTPISREASFEELLRRPEMDYSKLMQIEGFGPGLEDPQAAEQVQIQVKYSGYIQRQQEEINKAVRNENTGLPLTLDYKEVPGLSNEVIAKLNNHKPETIGQASRISGITPAAISILLVHLKKRGLLRKSA.

An FAD-binding site is contributed by 13–18 (GGGHAG). Position 273-287 (273-287 (GPRYCPSIEDKIHRF)) interacts with NAD(+).

It belongs to the MnmG family. In terms of assembly, homodimer. Heterotetramer of two MnmE and two MnmG subunits. The cofactor is FAD.

The protein localises to the cytoplasm. Functionally, NAD-binding protein involved in the addition of a carboxymethylaminomethyl (cmnm) group at the wobble position (U34) of certain tRNAs, forming tRNA-cmnm(5)s(2)U34. The chain is tRNA uridine 5-carboxymethylaminomethyl modification enzyme MnmG from Shewanella baltica (strain OS185).